A 130-amino-acid polypeptide reads, in one-letter code: L-ectoine synthase (130 aa).

Belongs to the ectoine synthase family.

It catalyses the reaction (2S)-4-acetamido-2-aminobutanoate = L-ectoine + H2O. It functions in the pathway amine and polyamine biosynthesis; ectoine biosynthesis; L-ectoine from L-aspartate 4-semialdehyde: step 3/3. Catalyzes the circularization of gamma-N-acetyl-alpha,gamma-diaminobutyric acid (ADABA) to ectoine (1,4,5,6-tetrahydro-2-methyl-4-pyrimidine carboxylic acid), which is an excellent osmoprotectant. This chain is L-ectoine synthase, found in Mycobacteroides abscessus (strain ATCC 19977 / DSM 44196 / CCUG 20993 / CIP 104536 / JCM 13569 / NCTC 13031 / TMC 1543 / L948) (Mycobacterium abscessus).